The primary structure comprises 251 residues: Probable transcriptional regulatory protein AAur_2300 (251 aa).

The protein belongs to the TACO1 family.

It localises to the cytoplasm. This is Probable transcriptional regulatory protein AAur_2300 from Paenarthrobacter aurescens (strain TC1).